A 102-amino-acid polypeptide reads, in one-letter code: Urease subunit beta (102 aa).

This sequence belongs to the urease beta subunit family. As to quaternary structure, heterotrimer of UreA (gamma), UreB (beta) and UreC (alpha) subunits. Three heterotrimers associate to form the active enzyme.

The protein localises to the cytoplasm. The catalysed reaction is urea + 2 H2O + H(+) = hydrogencarbonate + 2 NH4(+). It functions in the pathway nitrogen metabolism; urea degradation; CO(2) and NH(3) from urea (urease route): step 1/1. The protein is Urease subunit beta of Opitutus terrae (strain DSM 11246 / JCM 15787 / PB90-1).